We begin with the raw amino-acid sequence, 445 residues long: Phosphoglucosamine mutase (445 aa).

Ser-101 functions as the Phosphoserine intermediate in the catalytic mechanism. Mg(2+) contacts are provided by Ser-101, Asp-240, Asp-242, and Asp-244. A Phosphoserine modification is found at Ser-101.

This sequence belongs to the phosphohexose mutase family. Mg(2+) is required as a cofactor. In terms of processing, activated by phosphorylation.

It catalyses the reaction alpha-D-glucosamine 1-phosphate = D-glucosamine 6-phosphate. Catalyzes the conversion of glucosamine-6-phosphate to glucosamine-1-phosphate. The polypeptide is Phosphoglucosamine mutase (Pseudomonas aeruginosa (strain UCBPP-PA14)).